The sequence spans 245 residues: 1-(5-phosphoribosyl)-5-[(5-phosphoribosylamino)methylideneamino] imidazole-4-carboxamide isomerase (245 aa).

The Proton acceptor role is filled by D7. D129 functions as the Proton donor in the catalytic mechanism.

The protein belongs to the HisA/HisF family.

It is found in the cytoplasm. It catalyses the reaction 1-(5-phospho-beta-D-ribosyl)-5-[(5-phospho-beta-D-ribosylamino)methylideneamino]imidazole-4-carboxamide = 5-[(5-phospho-1-deoxy-D-ribulos-1-ylimino)methylamino]-1-(5-phospho-beta-D-ribosyl)imidazole-4-carboxamide. It functions in the pathway amino-acid biosynthesis; L-histidine biosynthesis; L-histidine from 5-phospho-alpha-D-ribose 1-diphosphate: step 4/9. This is 1-(5-phosphoribosyl)-5-[(5-phosphoribosylamino)methylideneamino] imidazole-4-carboxamide isomerase from Shewanella halifaxensis (strain HAW-EB4).